Reading from the N-terminus, the 136-residue chain is Small ribosomal subunit protein uS8 (136 aa).

Belongs to the universal ribosomal protein uS8 family. In terms of assembly, part of the 30S ribosomal subunit. Contacts proteins S5 and S12.

Functionally, one of the primary rRNA binding proteins, it binds directly to 16S rRNA central domain where it helps coordinate assembly of the platform of the 30S subunit. This is Small ribosomal subunit protein uS8 from Persephonella marina (strain DSM 14350 / EX-H1).